A 58-amino-acid polypeptide reads, in one-letter code: Large ribosomal subunit protein uL30 (58 aa).

This sequence belongs to the universal ribosomal protein uL30 family. In terms of assembly, part of the 50S ribosomal subunit.

This is Large ribosomal subunit protein uL30 from Cytophaga hutchinsonii (strain ATCC 33406 / DSM 1761 / CIP 103989 / NBRC 15051 / NCIMB 9469 / D465).